Reading from the N-terminus, the 653-residue chain is Bifunctional lysine-specific demethylase and histidyl-hydroxylase NO66 (653 aa).

Residues 1–12 (MKKATTSAAAKS) show a composition bias toward low complexity. Disordered stretches follow at residues 1 to 50 (MKKA…DMLA) and 65 to 137 (FDDD…LERT). Residues 13 to 26 (QGNSKMQKNANNGT) show a composition bias toward polar residues. At Ser44 the chain carries Phosphoserine. A compositionally biased stretch (low complexity) spans 72–86 (STSKKTQSGSAAAAK). Position 131 is a phosphoserine (Ser131). Thr137 is subject to Phosphothreonine. Ser138 carries the post-translational modification Phosphoserine. Residues 184–208 (AEPTEEGNNNNDEKETETIETHKAD) form a disordered region. Residues 194-208 (NDEKETETIETHKAD) are compositionally biased toward basic and acidic residues. A JmjC domain is found at 300 to 450 (FYSDGCSIRL…NLLETLMPMV (151 aa)). Fe cation contacts are provided by His351, Asp353, and His416.

Belongs to the ROX family. NO66 subfamily. It depends on Fe(2+) as a cofactor.

Its subcellular location is the nucleus. The enzyme catalyses N(6),N(6)-dimethyl-L-lysyl(36)-[histone H3] + 2 2-oxoglutarate + 2 O2 = L-lysyl(36)-[histone H3] + 2 formaldehyde + 2 succinate + 2 CO2. Its function is as follows. Oxygenase that can act as both a histone lysine demethylase and a ribosomal histidine hydroxylase. Specifically demethylates 'Lys-4' (H3K4me) and 'Lys-36' (H3K36me) of histone H3, thereby playing a central role in histone code. The chain is Bifunctional lysine-specific demethylase and histidyl-hydroxylase NO66 from Drosophila melanogaster (Fruit fly).